The sequence spans 112 residues: Probable insulin-like peptide beta-type 5 (112 aa).

A signal peptide spans 1-19; sequence MNSVFTIIFVLCALQVAAS. Residues 20–58 constitute a propeptide, removed; by convertase egl-3; it reads FRQSFGPSMSEESASMQLLRELQHNMMESAHRPMPRARR. 4 disulfides stabilise this stretch: cysteine 68/cysteine 97, cysteine 80/cysteine 110, cysteine 84/cysteine 111, and cysteine 96/cysteine 101.

The protein belongs to the insulin family. In terms of processing, may be processed by serine endoprotease bli-4. Expressed by ASI and ASJ sensory neurons.

It localises to the secreted. Probable insulin-like peptide which negatively regulates synapse development at the neuromuscular junctions. Probably acts as a daf-2/InsR agonist ligand to prevent dauer formation under optimal environmental conditions. Acts on AWC sensory neurons to regulate high salt chemotaxis responses. The protein is Probable insulin-like peptide beta-type 5 (ins-6) of Caenorhabditis elegans.